The following is a 231-amino-acid chain: Orotidine 5'-phosphate decarboxylase (231 aa).

Substrate-binding positions include aspartate 11, lysine 33, 60–69 (DLKFHDIPNT), threonine 120, arginine 181, glutamine 190, glycine 210, and arginine 211. Lysine 62 acts as the Proton donor in catalysis.

This sequence belongs to the OMP decarboxylase family. Type 1 subfamily. Homodimer.

It catalyses the reaction orotidine 5'-phosphate + H(+) = UMP + CO2. It functions in the pathway pyrimidine metabolism; UMP biosynthesis via de novo pathway; UMP from orotate: step 2/2. Its function is as follows. Catalyzes the decarboxylation of orotidine 5'-monophosphate (OMP) to uridine 5'-monophosphate (UMP). The sequence is that of Orotidine 5'-phosphate decarboxylase from Colwellia psychrerythraea (strain 34H / ATCC BAA-681) (Vibrio psychroerythus).